A 340-amino-acid polypeptide reads, in one-letter code: Extracellular matrix protein-binding protein emp (340 aa).

An N-terminal signal peptide occupies residues 1-26; the sequence is MKKKLLVLTMSTLFATQIMNSNHAKA.

The protein resides in the cell surface. In terms of biological role, adhesin that binds to the host cell extracellular matrix proteins fibronectin, fibrinogen, collagen, and vitronectin. The polypeptide is Extracellular matrix protein-binding protein emp (emp) (Staphylococcus aureus (strain MSSA476)).